We begin with the raw amino-acid sequence, 327 residues long: Inactive peptidyl-prolyl cis-trans isomerase FKBP6 (327 aa).

Residues 1 to 20 (MSVFSRLRNGIPPSRDDCQS) are disordered. In terms of domain architecture, PPIase FKBP-type spans 54 to 143 (DASVLVKYSG…LFEIELIDFL (90 aa)). TPR repeat units follow at residues 171–204 (AATE…LHRR), 219–252 (LLVL…DKRN), and 253–286 (AKAL…QPCN).

Belongs to the FKBP6 family. As to quaternary structure, interacts with HSP72/HSPA2 and CLTC. Interacts with GAPDH; leading to inhibit GAPDH catalytic activity. Interacts (via TPR repeats) with HSP90.

The protein localises to the cytoplasm. It is found in the cytosol. Its subcellular location is the nucleus. It localises to the chromosome. Functionally, co-chaperone required during spermatogenesis to repress transposable elements and prevent their mobilization, which is essential for the germline integrity. Acts via the piRNA metabolic process, which mediates the repression of transposable elements during meiosis by forming complexes composed of piRNAs and Piwi proteins and govern the methylation and subsequent repression of transposons. Acts as a co-chaperone via its interaction with HSP90 and is required for the piRNA amplification process, the secondary piRNA biogenesis. May be required together with HSP90 in removal of 16 nucleotide ping-pong by-products from Piwi complexes, possibly facilitating turnover of Piwi complexes. This Rattus norvegicus (Rat) protein is Inactive peptidyl-prolyl cis-trans isomerase FKBP6 (Fkbp6).